Consider the following 73-residue polypeptide: EAGEECDCGTPENPCCDAATCKLRPGAQCADGLCCDQCRFMKKGTVCRVARGDWNDDTCTGQSADCPRNGLYG.

In terms of domain architecture, Disintegrin spans 1 to 73 (EAGEECDCGT…ADCPRNGLYG (73 aa)). Disulfide bonds link Cys-6-Cys-21, Cys-8-Cys-16, Cys-15-Cys-38, Cys-29-Cys-35, Cys-34-Cys-59, and Cys-47-Cys-66. The Cell attachment site signature appears at 51–53 (RGD).

The protein belongs to the venom metalloproteinase (M12B) family. P-II subfamily. P-IIa sub-subfamily. As to quaternary structure, monomer (disintegrin). In terms of tissue distribution, expressed by the venom gland.

Its subcellular location is the secreted. Functionally, inhibits fibrinogen interaction with platelets. Acts by binding to alpha-IIb/beta-3 (ITGA2B/ITGB3) on the platelet surface and inhibits aggregation induced by ADP, thrombin, platelet-activating factor and collagen. This is Disintegrin cerastin from Crotalus cerastes cerastes (Mojave desert sidewinder).